Consider the following 245-residue polypeptide: Suppressor of aph-1 (245 aa).

Residues 12-60 enclose the GYF domain; the sequence is DTKWHYLGPDSEKYGPYMSKDMLFWLQAGYFNDGLQLKTENEPNYHTLG. The tract at residues 126–166 is disordered; sequence NQNGPPMGAQMHSQPPSEPIDAGSLSHTPDSENETRLNEQT.

Functionally, involved in negative regulation of early and late embryonic Notch signaling. This chain is Suppressor of aph-1, found in Caenorhabditis elegans.